A 288-amino-acid polypeptide reads, in one-letter code: ATP phosphoribosyltransferase (288 aa).

The protein belongs to the ATP phosphoribosyltransferase family. Long subfamily. The cofactor is Mg(2+).

It is found in the cytoplasm. It carries out the reaction 1-(5-phospho-beta-D-ribosyl)-ATP + diphosphate = 5-phospho-alpha-D-ribose 1-diphosphate + ATP. The protein operates within amino-acid biosynthesis; L-histidine biosynthesis; L-histidine from 5-phospho-alpha-D-ribose 1-diphosphate: step 1/9. Its activity is regulated as follows. Feedback inhibited by histidine. In terms of biological role, catalyzes the condensation of ATP and 5-phosphoribose 1-diphosphate to form N'-(5'-phosphoribosyl)-ATP (PR-ATP). Has a crucial role in the pathway because the rate of histidine biosynthesis seems to be controlled primarily by regulation of HisG enzymatic activity. In Methanococcus maripaludis (strain DSM 14266 / JCM 13030 / NBRC 101832 / S2 / LL), this protein is ATP phosphoribosyltransferase.